Here is a 361-residue protein sequence, read N- to C-terminus: DNA replication and repair protein RecF (361 aa).

30-37 (GPNGSGKT) contacts ATP.

Belongs to the RecF family.

It localises to the cytoplasm. Functionally, the RecF protein is involved in DNA metabolism; it is required for DNA replication and normal SOS inducibility. RecF binds preferentially to single-stranded, linear DNA. It also seems to bind ATP. The polypeptide is DNA replication and repair protein RecF (Yersinia pseudotuberculosis serotype IB (strain PB1/+)).